Consider the following 838-residue polypeptide: Outer membrane usher protein YraJ (838 aa).

The first 40 residues, 1-40, serve as a signal peptide directing secretion; it reads MPQRHHQGHKRTPKQLALIIKRCLPMVLTGSGMLCTTANA. A disulfide bond links C815 and C837.

This sequence belongs to the fimbrial export usher family.

It localises to the cell outer membrane. Functionally, part of the yraHIJK fimbrial operon. Could contribute to adhesion to various surfaces in specific environmental niches. Increases adhesion to eukaryotic T24 bladder epithelial cells in the absence of fim operon. Probably involved in the export and assembly of fimbrial subunits across the outer membrane. This is Outer membrane usher protein YraJ (yraJ) from Escherichia coli (strain K12).